Here is a 41-residue protein sequence, read N- to C-terminus: Photosystem I reaction center subunit IX (41 aa).

The helical transmembrane segment at 7–27 (YLSTAPVLLTLWMTFTAGFII) threads the bilayer.

It belongs to the PsaJ family.

Its subcellular location is the plastid. It localises to the chloroplast thylakoid membrane. Functionally, may help in the organization of the PsaE and PsaF subunits. The sequence is that of Photosystem I reaction center subunit IX from Trieres chinensis (Marine centric diatom).